The chain runs to 460 residues: Bifunctional protein GlmU (460 aa).

The pyrophosphorylase stretch occupies residues 1-232 (MALNVVILAA…AIEVEGANNR (232 aa)). UDP-N-acetyl-alpha-D-glucosamine is bound by residues 8 to 11 (LAAG), Lys22, Gln73, 78 to 79 (GT), 100 to 102 (YGD), Gly137, Glu157, Asn172, and Asn230. Position 102 (Asp102) interacts with Mg(2+). Asn230 is a Mg(2+) binding site. A linker region spans residues 233–253 (VQLAQLERAYQAREAEKLMLA). Residues 254 to 460 (GANLRDPSRI…GWQRPVKIKK (207 aa)) form an N-acetyltransferase region. 2 residues coordinate UDP-N-acetyl-alpha-D-glucosamine: Arg336 and Lys354. His366 serves as the catalytic Proton acceptor. Positions 369 and 380 each coordinate UDP-N-acetyl-alpha-D-glucosamine. Acetyl-CoA-binding positions include Ala383, 389 to 390 (NY), Ser408, Ala426, and Arg443.

The protein in the N-terminal section; belongs to the N-acetylglucosamine-1-phosphate uridyltransferase family. It in the C-terminal section; belongs to the transferase hexapeptide repeat family. Homotrimer. Mg(2+) is required as a cofactor.

The protein resides in the cytoplasm. It catalyses the reaction alpha-D-glucosamine 1-phosphate + acetyl-CoA = N-acetyl-alpha-D-glucosamine 1-phosphate + CoA + H(+). The enzyme catalyses N-acetyl-alpha-D-glucosamine 1-phosphate + UTP + H(+) = UDP-N-acetyl-alpha-D-glucosamine + diphosphate. The protein operates within nucleotide-sugar biosynthesis; UDP-N-acetyl-alpha-D-glucosamine biosynthesis; N-acetyl-alpha-D-glucosamine 1-phosphate from alpha-D-glucosamine 6-phosphate (route II): step 2/2. Its pathway is nucleotide-sugar biosynthesis; UDP-N-acetyl-alpha-D-glucosamine biosynthesis; UDP-N-acetyl-alpha-D-glucosamine from N-acetyl-alpha-D-glucosamine 1-phosphate: step 1/1. It functions in the pathway bacterial outer membrane biogenesis; LPS lipid A biosynthesis. In terms of biological role, catalyzes the last two sequential reactions in the de novo biosynthetic pathway for UDP-N-acetylglucosamine (UDP-GlcNAc). The C-terminal domain catalyzes the transfer of acetyl group from acetyl coenzyme A to glucosamine-1-phosphate (GlcN-1-P) to produce N-acetylglucosamine-1-phosphate (GlcNAc-1-P), which is converted into UDP-GlcNAc by the transfer of uridine 5-monophosphate (from uridine 5-triphosphate), a reaction catalyzed by the N-terminal domain. The sequence is that of Bifunctional protein GlmU from Shewanella baltica (strain OS195).